The sequence spans 169 residues: Translocator protein (169 aa).

Residues 2–5 (APPW) lie on the Mitochondrial intermembrane side of the membrane. Residues 6-26 (VPAMGFTLAPSLGCFVGSRFV) traverse the membrane as a helical segment. Residues 27–46 (HGEGLRWYAGLQKPSWHPPH) are Cytoplasmic-facing. A helical transmembrane segment spans residues 47–67 (WVLGPVWGTLYSAMGYGSYLV). At 68–79 (WKELGGFTEKAV) the chain is on the mitochondrial intermembrane side. Residues 80–100 (VPLGLYTGQLALNWAWPPIFF) traverse the membrane as a helical segment. Residues 101–105 (GARQM) are Cytoplasmic-facing. A helical transmembrane segment spans residues 106–126 (GWALVDLLLVSGAAAATTVAW). At 127 to 134 (YQVSPLAA) the chain is on the mitochondrial intermembrane side. Residues 135 to 155 (RLLYPYLAWLAFTTTLNYCVW) traverse the membrane as a helical segment. The Cytoplasmic portion of the chain corresponds to 156–169 (RDNHGWRGGRRLPE).

It belongs to the TspO/BZRP family. As to quaternary structure, interacts with TSPOAP1. May interact with STAR. Interacts with MOST-1. Interacts with TMEM97. Forms a complex with TMEM97 and PGRMC1; the interaction occurs in MIA PaCa-2 cells but not in MCF7 cells. As to expression, found in many tissue types. Expressed at the highest levels under normal conditions in tissues that synthesize steroids.

It localises to the mitochondrion membrane. Its function is as follows. Can bind protoporphyrin IX and may play a role in the transport of porphyrins and heme. Promotes the transport of cholesterol across mitochondrial membranes and may play a role in lipid metabolism, but its precise physiological role is controversial. It is apparently not required for steroid hormone biosynthesis. Was initially identified as peripheral-type benzodiazepine receptor; can also bind isoquinoline carboxamides. The chain is Translocator protein (TSPO) from Homo sapiens (Human).